A 252-amino-acid polypeptide reads, in one-letter code: Ribose-5-phosphate isomerase (252 aa).

It belongs to the ribose 5-phosphate isomerase family.

Its subcellular location is the cytoplasm. The catalysed reaction is aldehydo-D-ribose 5-phosphate = D-ribulose 5-phosphate. It functions in the pathway carbohydrate degradation; pentose phosphate pathway; D-ribose 5-phosphate from D-ribulose 5-phosphate (non-oxidative stage): step 1/1. The chain is Ribose-5-phosphate isomerase (RKI1) from Debaryomyces hansenii (strain ATCC 36239 / CBS 767 / BCRC 21394 / JCM 1990 / NBRC 0083 / IGC 2968) (Yeast).